Consider the following 225-residue polypeptide: MKWDWIFFDADETLFTFDSFTGLQRMFLDYSVTFTAEDFQDYQAVNKPLWVDYQNGAITSLQLQHGRFESWAERLNVEPGKLNEAFINAMAEICTPLPGAVSLLNAIRGNAKIGIITNGFSALQQVRLERTGLRDYFDLLVISEEVGVAKPNKKIFDYALEQAGNPDRSRVLMVGDTAESDILGGINAGLATCWLNAHHREQPEGIAPTWTVSSLHELEQLLCKH.

Residue aspartate 9 is the Nucleophile of the active site.

Belongs to the HAD-like hydrolase superfamily. YjjG family. Monomer, homodimer and possibly homotetramer in solution. Requires Mn(2+) as cofactor. The cofactor is Mg(2+). Co(2+) is required as a cofactor.

It localises to the cytoplasm. The catalysed reaction is a ribonucleoside 5'-phosphate + H2O = a ribonucleoside + phosphate. It catalyses the reaction a 2'-deoxyribonucleoside 5'-phosphate + H2O = a 2'-deoxyribonucleoside + phosphate. It carries out the reaction UMP + H2O = uridine + phosphate. The enzyme catalyses dUMP + H2O = 2'-deoxyuridine + phosphate. The catalysed reaction is dTMP + H2O = thymidine + phosphate. With respect to regulation, in contrast to nucleotidases from other families, is not inhibited by ribo- and deoxyribonucleoside di- and triphosphates. Nucleotidase that shows high phosphatase activity toward non-canonical pyrimidine nucleotides and three canonical nucleoside 5'-monophosphates (UMP, dUMP, and dTMP), and very low activity against TDP, IMP, UDP, GMP, dGMP, AMP, dAMP, and 6-phosphogluconate. Appears to function as a house-cleaning nucleotidase in vivo, since the general nucleotidase activity of YjjG allows it to protect cells against non-canonical pyrimidine derivatives such as 5-fluoro-2'-deoxyuridine, 5-fluorouridine, 5-fluoroorotate, 5-fluorouracil, and 5-aza-2'-deoxycytidine, and prevents the incorporation of potentially mutagenic nucleotides into DNA. Its dUMP phosphatase activity that catalyzes the hydrolysis of dUMP to deoxyuridine is necessary for thymine utilization via the thymine salvage pathway. Is strictly specific to substrates with 5'-phosphates and shows no activity against nucleoside 2'- or 3'-monophosphates. This chain is Pyrimidine 5'-nucleotidase YjjG (yjjG), found in Escherichia coli (strain K12).